A 233-amino-acid polypeptide reads, in one-letter code: MPKRGKKYLEALKLVDRSKAYPIAEAIELVKKTNIAKFDATVEVAFRLGVDPKKADQQIRGAVVLPHGTGKVARVLVFAKGEKAKEAEAAGADYVGDAEYINKIQQGWFDFDVVVATPDMMGEVGKLGRILGPKGLMPNPKTGTVTFDVAKAVQEIKAGKVEYRVDKAGNIHVPIGKVSFDNEKLAENFAAVYEAILKAKPAAAKGTYVKNVTITSTMGPGIKVDPSTVAVAQ.

Belongs to the universal ribosomal protein uL1 family. Part of the 50S ribosomal subunit.

Its function is as follows. Binds directly to 23S rRNA. The L1 stalk is quite mobile in the ribosome, and is involved in E site tRNA release. In terms of biological role, protein L1 is also a translational repressor protein, it controls the translation of the L11 operon by binding to its mRNA. The protein is Large ribosomal subunit protein uL1 of Geobacillus kaustophilus (strain HTA426).